A 132-amino-acid polypeptide reads, in one-letter code: Small ribosomal subunit protein uS8 (132 aa).

It belongs to the universal ribosomal protein uS8 family. Part of the 30S ribosomal subunit. Contacts proteins S5 and S12.

Functionally, one of the primary rRNA binding proteins, it binds directly to 16S rRNA central domain where it helps coordinate assembly of the platform of the 30S subunit. The polypeptide is Small ribosomal subunit protein uS8 (Nocardia farcinica (strain IFM 10152)).